Consider the following 281-residue polypeptide: MSLSALENTINTAFDARDTISAATKGEVRDAVDQALDLLDRGEARVAERDASGTWTVNQWLKKAVLLSFRLNDMHTIAGGPGGATWWDKVPSKFEGWGESRFREAGFRAVPGAIVRRSAFIAKNAVLMPSFVNLGAYVDEATMVDTWSTVGSCAQIGKRVHISGGVGIGGVLEPLQAGPVIIEDDCFIGARSEVAEGVIVRRGAVLAMGVFLGASTKIVDRETGEVFIGEVPEYAVLVPGALPGKPLKNGTPGPSTACAVIVKRVDERTRSKTSINELLRD.

Residues R108 and D145 each contribute to the substrate site.

This sequence belongs to the transferase hexapeptide repeat family. Homotrimer.

It is found in the cytoplasm. The catalysed reaction is (S)-2,3,4,5-tetrahydrodipicolinate + succinyl-CoA + H2O = (S)-2-succinylamino-6-oxoheptanedioate + CoA. It functions in the pathway amino-acid biosynthesis; L-lysine biosynthesis via DAP pathway; LL-2,6-diaminopimelate from (S)-tetrahydrodipicolinate (succinylase route): step 1/3. This is 2,3,4,5-tetrahydropyridine-2,6-dicarboxylate N-succinyltransferase from Rhodopseudomonas palustris (strain BisB5).